A 227-amino-acid chain; its full sequence is Urease accessory protein UreF (227 aa).

It belongs to the UreF family. In terms of assembly, ureD, UreF and UreG form a complex that acts as a GTP-hydrolysis-dependent molecular chaperone, activating the urease apoprotein by helping to assemble the nickel containing metallocenter of UreC. The UreE protein probably delivers the nickel.

It is found in the cytoplasm. In terms of biological role, required for maturation of urease via the functional incorporation of the urease nickel metallocenter. The polypeptide is Urease accessory protein UreF (Bacillus sp. (strain TB-90)).